The following is a 225-amino-acid chain: Uracil-DNA glycosylase (225 aa).

D67 (proton acceptor) is an active-site residue.

This sequence belongs to the uracil-DNA glycosylase (UDG) superfamily. UNG family.

It is found in the cytoplasm. It carries out the reaction Hydrolyzes single-stranded DNA or mismatched double-stranded DNA and polynucleotides, releasing free uracil.. Functionally, excises uracil residues from the DNA which can arise as a result of misincorporation of dUMP residues by DNA polymerase or due to deamination of cytosine. This is Uracil-DNA glycosylase from Coxiella burnetii (strain Dugway 5J108-111).